The sequence spans 127 residues: Movement protein TGB2 (127 aa).

Topologically, residues 1–24 (MSLSHGTGAPAISTPLTLRPPPDN) are cytoplasmic. Residues 25–45 (TKAILTIAIGIAASLVFFMLT) traverse the membrane as a helical segment. Over 46–85 (RNNLPHVGDNIHSLPHGGSYIDGTKSINYRPPASRYPSSN) the chain is Lumenal. Residues 86 to 106 (LLAFAPPILAAVLFFLTQPYL) traverse the membrane as a helical segment. Residues 107 to 127 (ATRRSRCVRCFVVHGACTNHT) lie on the Cytoplasmic side of the membrane.

This sequence belongs to the Tymovirales TGBp2 protein family.

It is found in the host endoplasmic reticulum membrane. Plays a role in viral cell-to-cell propagation, by facilitating genome transport to neighboring plant cells through plasmosdesmata,. This chain is Movement protein TGB2, found in Setaria italica (Foxtail millet).